The primary structure comprises 452 residues: Phosphoglucosamine mutase (452 aa).

S108 functions as the Phosphoserine intermediate in the catalytic mechanism. Mg(2+)-binding residues include S108, D247, D249, and D251. S108 carries the post-translational modification Phosphoserine.

It belongs to the phosphohexose mutase family. Requires Mg(2+) as cofactor. Activated by phosphorylation.

It carries out the reaction alpha-D-glucosamine 1-phosphate = D-glucosamine 6-phosphate. Catalyzes the conversion of glucosamine-6-phosphate to glucosamine-1-phosphate. This Burkholderia pseudomallei (strain K96243) protein is Phosphoglucosamine mutase.